Here is a 294-residue protein sequence, read N- to C-terminus: MTKRRSTSRGPGRILGILGHPVAHSASPAMHNAAFAAQGMHAMYGAFDVPPSQLEKAIAGIRALGLLGVNVTIPHKEAVMAYLDDVAPTARQVGAVNTIVNRGGRLIGYNTDGWGFLLSLEERGVRVAGRNAVVLGAGGAARAVALHLGMAGVARLTIINRSRQRAEFLAADLARAKTPVRAEVADPGSEEARAALAEAGLVVNCTPLGMEPDTESTPLEDVGLLPAHCVVYDTVYRPLETRLLREARQHGLITVNGLAMLVHQGACAWEYWFGRRGPVDVMRTAALAALEGQP.

Shikimate-binding positions include 25-27 and threonine 72; that span reads SAS. Catalysis depends on lysine 76, which acts as the Proton acceptor. Residues asparagine 97 and aspartate 112 each contribute to the shikimate site. NADP(+) is bound by residues 136-140 and threonine 234; that span reads GAGGA. Tyrosine 236 is a shikimate binding site. Glycine 257 is a binding site for NADP(+).

The protein belongs to the shikimate dehydrogenase family. In terms of assembly, homodimer.

The catalysed reaction is shikimate + NADP(+) = 3-dehydroshikimate + NADPH + H(+). Its pathway is metabolic intermediate biosynthesis; chorismate biosynthesis; chorismate from D-erythrose 4-phosphate and phosphoenolpyruvate: step 4/7. Involved in the biosynthesis of the chorismate, which leads to the biosynthesis of aromatic amino acids. Catalyzes the reversible NADPH linked reduction of 3-dehydroshikimate (DHSA) to yield shikimate (SA). This is Shikimate dehydrogenase (NADP(+)) from Symbiobacterium thermophilum (strain DSM 24528 / JCM 14929 / IAM 14863 / T).